The following is a 212-amino-acid chain: MSKLLYIEASPRKNKSFSTRVAQSFINTFLDADPANRIETLDLWDFPLPEVDGSYLSAKYKILHWQDPTEAEARAWTEIANIVSQFKDADSYLFSIPMWNFSIPYKLKHFIDIITQPGLTFMFSPESGYQGLVTGKACTVIYARGAQYRGTKGSTLDFQKTYMELLLSFIGFENIHSIRVEPTLTDSASRERVLATAKLEAISLAKELYSLI.

FMN contacts are provided by residues serine 10, 16–18 (SFS), and 98–101 (MWNF).

It belongs to the azoreductase type 1 family. In terms of assembly, homodimer. The cofactor is FMN.

The enzyme catalyses 2 a quinone + NADH + H(+) = 2 a 1,4-benzosemiquinone + NAD(+). It carries out the reaction N,N-dimethyl-1,4-phenylenediamine + anthranilate + 2 NAD(+) = 2-(4-dimethylaminophenyl)diazenylbenzoate + 2 NADH + 2 H(+). Its function is as follows. Quinone reductase that provides resistance to thiol-specific stress caused by electrophilic quinones. In terms of biological role, also exhibits azoreductase activity. Catalyzes the reductive cleavage of the azo bond in aromatic azo compounds to the corresponding amines. The sequence is that of FMN-dependent NADH:quinone oxidoreductase from Desulfotalea psychrophila (strain LSv54 / DSM 12343).